An 89-amino-acid polypeptide reads, in one-letter code: Large ribosomal subunit protein bL27 (89 aa).

Residues 1-21 (MAHKKAGGSSRNGRDTEGRRL) form a disordered region.

This sequence belongs to the bacterial ribosomal protein bL27 family.

The protein is Large ribosomal subunit protein bL27 of Granulibacter bethesdensis (strain ATCC BAA-1260 / CGDNIH1).